A 460-amino-acid chain; its full sequence is Cysteine--tRNA ligase (460 aa).

Zn(2+) is bound at residue Cys-29. Residues 31-41 (ATPQSSPHIGH) carry the 'HIGH' region motif. Positions 212, 237, and 241 each coordinate Zn(2+). The 'KMSKS' region motif lies at 268–272 (KMSKS). Residue Lys-271 participates in ATP binding.

The protein belongs to the class-I aminoacyl-tRNA synthetase family. Monomer. The cofactor is Zn(2+).

The protein resides in the cytoplasm. It catalyses the reaction tRNA(Cys) + L-cysteine + ATP = L-cysteinyl-tRNA(Cys) + AMP + diphosphate. This is Cysteine--tRNA ligase from Corynebacterium glutamicum (strain ATCC 13032 / DSM 20300 / JCM 1318 / BCRC 11384 / CCUG 27702 / LMG 3730 / NBRC 12168 / NCIMB 10025 / NRRL B-2784 / 534).